The chain runs to 607 residues: Large ribosomal subunit assembly factor BipA (607 aa).

In terms of domain architecture, tr-type G spans 3–198 (HSIRNIAIIA…SIIKYAPAPN (196 aa)). GTP contacts are provided by residues 15 to 20 (DHGKTT) and 128 to 131 (NKID).

The protein belongs to the TRAFAC class translation factor GTPase superfamily. Classic translation factor GTPase family. BipA subfamily. In terms of assembly, monomer.

The protein resides in the cytoplasm. The enzyme catalyses GTP + H2O = GDP + phosphate + H(+). In terms of biological role, a 50S ribosomal subunit assembly protein with GTPase activity, required for 50S subunit assembly at low temperatures, may also play a role in translation. Binds GTP and analogs. Binds the 70S ribosome between the 30S and 50S subunits, in a similar position as ribosome-bound EF-G; it contacts a number of ribosomal proteins, both rRNAs and the A-site tRNA. The chain is Large ribosomal subunit assembly factor BipA from Buchnera aphidicola subsp. Acyrthosiphon pisum (strain APS) (Acyrthosiphon pisum symbiotic bacterium).